A 60-amino-acid polypeptide reads, in one-letter code: Large ribosomal subunit protein bL32 (60 aa).

Positions 1-60 (MAVQQNKKSPSKRGMHRSHDFLVNPSTAIEPTTGETHLRHHISPNGFYRGRKVLKTKADE) are disordered. The segment covering 24–35 (NPSTAIEPTTGE) has biased composition (polar residues). A compositionally biased stretch (basic residues) spans 49–60 (RGRKVLKTKADE).

Belongs to the bacterial ribosomal protein bL32 family.

This Bordetella petrii (strain ATCC BAA-461 / DSM 12804 / CCUG 43448) protein is Large ribosomal subunit protein bL32.